We begin with the raw amino-acid sequence, 547 residues long: Chaperonin GroEL (547 aa).

Residues T30 to P33, K51, D87 to T91, G415, N479 to A481, and D495 contribute to the ATP site.

The protein belongs to the chaperonin (HSP60) family. As to quaternary structure, forms a cylinder of 14 subunits composed of two heptameric rings stacked back-to-back. Interacts with the co-chaperonin GroES.

The protein resides in the cytoplasm. The enzyme catalyses ATP + H2O + a folded polypeptide = ADP + phosphate + an unfolded polypeptide.. In terms of biological role, together with its co-chaperonin GroES, plays an essential role in assisting protein folding. The GroEL-GroES system forms a nano-cage that allows encapsulation of the non-native substrate proteins and provides a physical environment optimized to promote and accelerate protein folding. This is Chaperonin GroEL from Pseudomonas putida (strain GB-1).